Here is a 610-residue protein sequence, read N- to C-terminus: MSDQFDAKAFLKTVTSQPGVYRMYDAGGTVIYVGKAKDLKKRLSSYFRSNLASRKTEALVAQIQQIDVTVTHTETEALLLEHNYIKLYQPRYNVLLRDDKSYPFIFLSGDTHPRLAMHRGAKHAKGEYFGPFPNGYAVRETLALLQKIFPIRQCENSVYRNRSRPCLQYQIGRCLGPCVEGLVSEEEYAQQVEYVRLFLSGKDDQVLTQLISRMETASQNLEFEEAARIRDQIQAVRRVTEKQFVSNTGNDLDVIGVAFDAGMACVHVLFIRQGKVLGSRSYFPKVPGGTELSEVVETFVGQFYLQGSQMRTLPGEILLDFNLSDKTLLADSLSELAGRKINVQTKPRGDRARYLKLARTNAATALISKLSQQSTVHQRLTALASVLKLPEVKRMECFDISHTMGEQTVASCVVFDANGPLRAEYRRYNITGITPGDDYAAMNQVLRRRYGKAIDDSKIPDVILIDGGKGQLAQAKNVFAELDVSWDKNHPLLLGVAKGADRKAGLETLFFEPEGEGFSLPPDSPALHVIQHIRDESHDHAIGGHRKKRAKVKNTSSLETIEGVGPKRRQMLLKYMGGLQGLRNASVEEIAKVPGISQGLAEKIFWSLKH.

A GIY-YIG domain is found at 16 to 94 (SQPGVYRMYD…IKLYQPRYNV (79 aa)). One can recognise a UVR domain in the interval 204–239 (DQVLTQLISRMETASQNLEFEEAARIRDQIQAVRRV).

The protein belongs to the UvrC family. In terms of assembly, interacts with UvrB in an incision complex.

It is found in the cytoplasm. Its function is as follows. The UvrABC repair system catalyzes the recognition and processing of DNA lesions. UvrC both incises the 5' and 3' sides of the lesion. The N-terminal half is responsible for the 3' incision and the C-terminal half is responsible for the 5' incision. The chain is UvrABC system protein C from Shigella boydii serotype 18 (strain CDC 3083-94 / BS512).